The following is a 295-amino-acid chain: Pyridoxal 5'-phosphate synthase subunit PdxS (295 aa).

D-ribose 5-phosphate is bound at residue Asp-25. The Schiff-base intermediate with D-ribose 5-phosphate role is filled by Lys-82. Gly-154 provides a ligand contact to D-ribose 5-phosphate. D-glyceraldehyde 3-phosphate is bound at residue Arg-166. Residues Gly-215 and 236-237 (GS) contribute to the D-ribose 5-phosphate site.

Belongs to the PdxS/SNZ family. As to quaternary structure, in the presence of PdxT, forms a dodecamer of heterodimers.

The enzyme catalyses aldehydo-D-ribose 5-phosphate + D-glyceraldehyde 3-phosphate + L-glutamine = pyridoxal 5'-phosphate + L-glutamate + phosphate + 3 H2O + H(+). Its pathway is cofactor biosynthesis; pyridoxal 5'-phosphate biosynthesis. Its function is as follows. Catalyzes the formation of pyridoxal 5'-phosphate from ribose 5-phosphate (RBP), glyceraldehyde 3-phosphate (G3P) and ammonia. The ammonia is provided by the PdxT subunit. Can also use ribulose 5-phosphate and dihydroxyacetone phosphate as substrates, resulting from enzyme-catalyzed isomerization of RBP and G3P, respectively. The polypeptide is Pyridoxal 5'-phosphate synthase subunit PdxS (Macrococcus caseolyticus (strain JCSC5402) (Macrococcoides caseolyticum)).